An 89-amino-acid chain; its full sequence is Small ribosomal subunit protein uS19 (89 aa).

The protein belongs to the universal ribosomal protein uS19 family.

Functionally, protein S19 forms a complex with S13 that binds strongly to the 16S ribosomal RNA. The sequence is that of Small ribosomal subunit protein uS19 from Bacteroides fragilis (strain YCH46).